The primary structure comprises 389 residues: Sulfate adenylyltransferase (389 aa).

This sequence belongs to the sulfate adenylyltransferase family.

The catalysed reaction is sulfate + ATP + H(+) = adenosine 5'-phosphosulfate + diphosphate. It functions in the pathway sulfur metabolism; hydrogen sulfide biosynthesis; sulfite from sulfate: step 1/3. The protein is Sulfate adenylyltransferase of Deinococcus geothermalis (strain DSM 11300 / CIP 105573 / AG-3a).